The primary structure comprises 368 residues: Alanine racemase (368 aa).

Catalysis depends on Lys-40, which acts as the Proton acceptor; specific for D-alanine. Lys-40 is modified (N6-(pyridoxal phosphate)lysine). Substrate is bound at residue Arg-134. Residue Tyr-263 is the Proton acceptor; specific for L-alanine of the active site. Met-310 is a substrate binding site.

The protein belongs to the alanine racemase family. Pyridoxal 5'-phosphate serves as cofactor.

The enzyme catalyses L-alanine = D-alanine. It functions in the pathway amino-acid biosynthesis; D-alanine biosynthesis; D-alanine from L-alanine: step 1/1. Its function is as follows. Catalyzes the interconversion of L-alanine and D-alanine. May also act on other amino acids. The chain is Alanine racemase (alr) from Listeria monocytogenes serotype 4a (strain HCC23).